A 364-amino-acid chain; its full sequence is MKRYLVLEDGTIYPGTGFGATTATVGELVFNTGMSGYQESITDQSYNGEILMFTYPLIGNYGINRDDHESIKPTCKGVVVHEVARRASNWRNAQSLDDYLKQNAIPGIMDIDTRAVTKHIRTKGAMKATIVDNVLPDTVDRLKVTELNRAVVAQSSTNNAYPNPATGPNVVVVDFGLKHSILRELAKRQCNLTVLPYNTTASEIMALNPDGVMLTNGPGDPKDVPGALEMIREVEKHVPLFGICLGHQLFALANGADTFKMKFGHRGFNHPVREIATGRIDFTSQNHGYAVDRDSLAQTDLLITHEEINDGTVEGLRHRDYAAFSVQYHPDAAPGPHDADHIFDEFIDLMAANQATQKGSQFNA.

The interval 1–169 (MKRYLVLEDG…AYPNPATGPN (169 aa)) is CPSase. Ser-45, Gly-217, and Gly-219 together coordinate L-glutamine. A Glutamine amidotransferase type-1 domain is found at 169–356 (NVVVVDFGLK…IDLMAANQAT (188 aa)). Cys-244 (nucleophile) is an active-site residue. 5 residues coordinate L-glutamine: Leu-245, Gln-248, Asn-286, Gly-288, and Tyr-289. Residues His-329 and Asp-331 contribute to the active site.

This sequence belongs to the CarA family. Composed of two chains; the small (or glutamine) chain promotes the hydrolysis of glutamine to ammonia, which is used by the large (or ammonia) chain to synthesize carbamoyl phosphate. Tetramer of heterodimers (alpha,beta)4.

The catalysed reaction is hydrogencarbonate + L-glutamine + 2 ATP + H2O = carbamoyl phosphate + L-glutamate + 2 ADP + phosphate + 2 H(+). It carries out the reaction L-glutamine + H2O = L-glutamate + NH4(+). It functions in the pathway pyrimidine metabolism; UMP biosynthesis via de novo pathway; (S)-dihydroorotate from bicarbonate: step 1/3. Its activity is regulated as follows. Inhibited by pyrimidine. Functionally, small subunit of the glutamine-dependent carbamoyl phosphate synthetase (CPSase). CPSase catalyzes the formation of carbamoyl phosphate from the ammonia moiety of glutamine, carbonate, and phosphate donated by ATP, constituting the first step of the biosynthetic pathway leading to pyrimidine nucleotides. The small subunit (glutamine amidotransferase) binds and cleaves glutamine to supply the large subunit with the substrate ammonia. The protein is Carbamoyl phosphate synthase pyrimidine-specific small chain of Lactiplantibacillus plantarum (strain ATCC BAA-793 / NCIMB 8826 / WCFS1) (Lactobacillus plantarum).